Reading from the N-terminus, the 408-residue chain is DNA primase DnaG (408 aa).

The region spanning 165–243 (PELIIVEGRA…KIDYVARAPT (79 aa)) is the Toprim domain. 3 residues coordinate Mg(2+): Glu171, Asp216, and Asp218.

The protein belongs to the archaeal DnaG primase family. Forms a ternary complex with MCM helicase and DNA. Component of the archaeal exosome complex. The cofactor is Mg(2+).

The catalysed reaction is ssDNA + n NTP = ssDNA/pppN(pN)n-1 hybrid + (n-1) diphosphate.. In terms of biological role, RNA polymerase that catalyzes the synthesis of short RNA molecules used as primers for DNA polymerase during DNA replication. Also part of the exosome, which is a complex involved in RNA degradation. Acts as a poly(A)-binding protein that enhances the interaction between heteromeric, adenine-rich transcripts and the exosome. The polypeptide is DNA primase DnaG (Sulfurisphaera tokodaii (strain DSM 16993 / JCM 10545 / NBRC 100140 / 7) (Sulfolobus tokodaii)).